The primary structure comprises 251 residues: uncharacterized protein (251 aa).

The first 19 residues, 1–19 (MRYLKRITIYISLLILVSG), serve as a signal peptide directing secretion. A lipid anchor (N-palmitoyl cysteine) is attached at Cys-20. A lipid anchor (S-diacylglycerol cysteine) is attached at Cys-20.

This sequence belongs to the staphylococcal tandem lipoprotein family.

It is found in the cell membrane. This is an uncharacterized protein from Staphylococcus epidermidis (strain ATCC 12228 / FDA PCI 1200).